The sequence spans 148 residues: 3-hydroxyacyl-[acyl-carrier-protein] dehydratase FabZ (148 aa).

The active site involves H55.

It belongs to the thioester dehydratase family. FabZ subfamily.

Its subcellular location is the cytoplasm. The enzyme catalyses a (3R)-hydroxyacyl-[ACP] = a (2E)-enoyl-[ACP] + H2O. Its function is as follows. Involved in unsaturated fatty acids biosynthesis. Catalyzes the dehydration of short chain beta-hydroxyacyl-ACPs and long chain saturated and unsaturated beta-hydroxyacyl-ACPs. The polypeptide is 3-hydroxyacyl-[acyl-carrier-protein] dehydratase FabZ (Haemophilus influenzae (strain PittEE)).